A 514-amino-acid polypeptide reads, in one-letter code: FAD-dependent monooxygenase AacuC (514 aa).

The segment at 1–29 is disordered; the sequence is MVSNEYLTHGDKDEFDPAKWSSTPGELPP. The span at 8 to 17 shows a compositional bias: basic and acidic residues; it reads THGDKDEFDP. FAD-binding residues include V79 and R146. The active site involves R227. D358 and G371 together coordinate FAD.

This sequence belongs to the paxM FAD-dependent monooxygenase family. Requires FAD as cofactor.

It functions in the pathway secondary metabolite biosynthesis. FAD-dependent monooxygenase; part of the gene cluster that mediates the biosynthesis of the tetrahydroxanthone dimer secalonic acid D. The pathway begins with the synthesis of atrochrysone thioester by the polyketide synthase AacuL. The atrochrysone carboxyl ACP thioesterase AacuM then breaks the thioester bond and releases the atrochrysone carboxylic acid from AacuL. Atrochrysone carboxylic acid is decarboxylated by the decarboxylase AacuI, and oxidized by the anthrone oxygenase AacuG to yield emodin. Emodin is then reduced to emodin hydroquinone by a yet unidentified oxidoreductase. A-ring reduction by the short chain dehydrogenase AacuN, dehydration by the scytalone dehydratase-like protein AacuK and probable spontaneous re-oxidation, results in overall deoxygenation to chrysophanol. Baeyer-Villiger oxidation by the Baeyer-Villiger monooxygenase (BVMO) AacuH then yields monodictyphenone. Monodictyphenone is transformed into compounds with the tetrahydroxanthone skeleton via methylesterification by the methyltransferase AacuQ, followed by the action of the flavin-dependent monooxygenase AacuC, the isomerase AacuP, and the short chain dehydrogenase/reductase AacuF or AacuD. AacuF and AacuD should accept the same compound as a substrate but perform the ketoreduction with a different stereoselectivity, thus yielding blennolides B and A, respectively. In the final step of the biosynthesis, the cytochrome P450 monooxygenase AacuE accepts blennolide B and/or blennolide A to conduct the dimerization reaction to furnish the tetrahydroxanthone dimers, secalonic acids D, B, and F. The sequence is that of FAD-dependent monooxygenase AacuC from Aspergillus aculeatus (strain ATCC 16872 / CBS 172.66 / WB 5094).